The sequence spans 627 residues: (R)-linalool synthase 1, chloroplastic (627 aa).

A chloroplast-targeting transit peptide spans 1–21 (MAFVSIAPLASRCCVHKSFVS). Residues Asp-378, Asp-382, and Glu-530 each coordinate Mg(2+). The short motif at 378-382 (DDIYD) is the DDXXD motif element.

It belongs to the terpene synthase family. Tpsd subfamily. The cofactor is Mg(2+). Mn(2+) serves as cofactor.

The protein resides in the plastid. It is found in the chloroplast. The catalysed reaction is (2E)-geranyl diphosphate + H2O = (R)-linalool + diphosphate. It functions in the pathway terpene metabolism; oleoresin biosynthesis. Functionally, terpene synthase (TPS) involved in the biosynthesis of monoterpene natural products included in conifer oleoresin secretions and volatile emissions; these compounds contribute to biotic and abiotic stress defense against herbivores and pathogens. Catalyzes the conversion of (2E)-geranyl diphosphate (GPP) to (R)-linalool. The polypeptide is (R)-linalool synthase 1, chloroplastic (Picea sitchensis (Sitka spruce)).